An 805-amino-acid chain; its full sequence is Leucine--tRNA ligase (805 aa).

Residues 40–51 carry the 'HIGH' region motif; the sequence is PYPSGAGLHVGH. Positions 576-580 match the 'KMSKS' region motif; that stretch reads KMSKS. Lys579 provides a ligand contact to ATP.

The protein belongs to the class-I aminoacyl-tRNA synthetase family.

It is found in the cytoplasm. It carries out the reaction tRNA(Leu) + L-leucine + ATP = L-leucyl-tRNA(Leu) + AMP + diphosphate. This is Leucine--tRNA ligase from Geobacillus thermodenitrificans (strain NG80-2).